The primary structure comprises 209 residues: NAD(P)H-quinone oxidoreductase subunit N, chloroplastic (209 aa).

A chloroplast-targeting transit peptide spans 1 to 45 (MGSRAICIQRVAPPCFEASQVKKIKTVGSFLVNTRSKRRRSTGVK).

This sequence belongs to the NDH complex subunit N family. In terms of assembly, part of the chloroplast NDH complex, composed of a mixture of chloroplast and nucleus encoded subunits. Component of the NDH subcomplex A, at least composed of ndhH, ndhI, ndhJ, ndhK, ndhL, ndhM, ndhN and ndhO.

The protein localises to the plastid. The protein resides in the chloroplast thylakoid membrane. It carries out the reaction a plastoquinone + NADH + (n+1) H(+)(in) = a plastoquinol + NAD(+) + n H(+)(out). The enzyme catalyses a plastoquinone + NADPH + (n+1) H(+)(in) = a plastoquinol + NADP(+) + n H(+)(out). Functionally, NDH shuttles electrons from NAD(P)H:plastoquinone, via FMN and iron-sulfur (Fe-S) centers, to quinones in the photosynthetic chain and possibly in a chloroplast respiratory chain. The immediate electron acceptor for the enzyme in this species is believed to be plastoquinone. Couples the redox reaction to proton translocation, and thus conserves the redox energy in a proton gradient. The chain is NAD(P)H-quinone oxidoreductase subunit N, chloroplastic from Arabidopsis thaliana (Mouse-ear cress).